A 76-amino-acid chain; its full sequence is Dermaseptin-S7 (76 aa).

Positions 1 to 22 (MDILKKSLFLVLFLGLISLSFC) are cleaved as a signal peptide. Residues 23 to 45 (EEEKRENEDEEEQEDDEQSEEKR) constitute a propeptide that is removed on maturation. The disordered stretch occupies residues 25 to 45 (EKRENEDEEEQEDDEQSEEKR). Acidic residues predominate over residues 30 to 41 (EDEEEQEDDEQS). At Q73 the chain carries Glutamine amide. Positions 75-76 (EQ) are excised as a propeptide.

It belongs to the frog skin active peptide (FSAP) family. Dermaseptin subfamily. As to expression, expressed by the skin glands.

It is found in the secreted. Its function is as follows. Antimicrobial peptide. The chain is Dermaseptin-S7 from Phyllomedusa sauvagei (Sauvage's leaf frog).